Consider the following 511-residue polypeptide: Ribose import ATP-binding protein RbsA (511 aa).

ABC transporter domains are found at residues leucine 7–glutamate 242 and cysteine 256–glutamine 500. An ATP-binding site is contributed by glycine 39–serine 46.

It belongs to the ABC transporter superfamily. Ribose importer (TC 3.A.1.2.1) family. The complex is composed of an ATP-binding protein (RbsA), two transmembrane proteins (RbsC) and a solute-binding protein (RbsB).

It is found in the cell inner membrane. It catalyses the reaction D-ribose(out) + ATP + H2O = D-ribose(in) + ADP + phosphate + H(+). Its function is as follows. Part of the ABC transporter complex RbsABC involved in ribose import. Responsible for energy coupling to the transport system. The protein is Ribose import ATP-binding protein RbsA of Ruegeria sp. (strain TM1040) (Silicibacter sp.).